The following is a 56-amino-acid chain: Metallothionein (56 aa).

Cys9, Cys11, Cys14, Cys16, Cys32, Cys36, His40, Cys47, His49, Cys52, and Cys54 together coordinate Zn(2+).

This sequence belongs to the metallothionein superfamily. Type 14 family.

In terms of biological role, may play a role in essential metal ion homeostasis (especially zinc homeostasis) and resistance to certain non-essential metal ions. Binds four zinc ions. This chain is Metallothionein (smtA), found in Synechococcus elongatus (strain ATCC 33912 / PCC 7942 / FACHB-805) (Anacystis nidulans R2).